A 474-amino-acid chain; its full sequence is Probable phenylalanine--tRNA ligase alpha subunit (474 aa).

The segment at 1-150 is contains the major tRNA-Phe binding sites; it reads MSLSQKILEL…KRKLIYQAKE (150 aa). Residues Thr-308, 350-352, and Tyr-390 each bind L-phenylalanine; that span reads QVE. Residue Glu-392 coordinates Mg(2+). L-phenylalanine is bound at residue Phe-416.

The protein belongs to the class-II aminoacyl-tRNA synthetase family. Phe-tRNA synthetase alpha subunit type 2 subfamily. As to quaternary structure, tetramer of two alpha and two beta subunits. It depends on Mg(2+) as a cofactor.

It is found in the cytoplasm. The catalysed reaction is tRNA(Phe) + L-phenylalanine + ATP = L-phenylalanyl-tRNA(Phe) + AMP + diphosphate + H(+). This chain is Probable phenylalanine--tRNA ligase alpha subunit, found in Vairimorpha ceranae (strain BRL01) (Microsporidian parasite).